The chain runs to 267 residues: tRNA pseudouridine synthase A (267 aa).

Residue Asp51 is the Nucleophile of the active site. Tyr109 contributes to the substrate binding site.

This sequence belongs to the tRNA pseudouridine synthase TruA family. Homodimer.

The enzyme catalyses uridine(38/39/40) in tRNA = pseudouridine(38/39/40) in tRNA. Formation of pseudouridine at positions 38, 39 and 40 in the anticodon stem and loop of transfer RNAs. This is tRNA pseudouridine synthase A from Staphylococcus aureus (strain bovine RF122 / ET3-1).